A 222-amino-acid polypeptide reads, in one-letter code: Putative O-methyltransferase MAV_1364 (222 aa).

S-adenosyl-L-methionine-binding positions include V49, E71, 73–74 (GT), S79, D97, and I98. Position 145 (D145) interacts with substrate. An S-adenosyl-L-methionine-binding site is contributed by D147.

This sequence belongs to the class I-like SAM-binding methyltransferase superfamily. Cation-dependent O-methyltransferase family.

The protein is Putative O-methyltransferase MAV_1364 of Mycobacterium avium (strain 104).